Here is a 178-residue protein sequence, read N- to C-terminus: ATP-dependent protease subunit HslV (178 aa).

T7 is an active-site residue. Na(+) is bound by residues G162, C165, and T168.

This sequence belongs to the peptidase T1B family. HslV subfamily. As to quaternary structure, a double ring-shaped homohexamer of HslV is capped on each side by a ring-shaped HslU homohexamer. The assembly of the HslU/HslV complex is dependent on binding of ATP.

It is found in the cytoplasm. It carries out the reaction ATP-dependent cleavage of peptide bonds with broad specificity.. Allosterically activated by HslU binding. In terms of biological role, protease subunit of a proteasome-like degradation complex believed to be a general protein degrading machinery. The protein is ATP-dependent protease subunit HslV of Burkholderia lata (strain ATCC 17760 / DSM 23089 / LMG 22485 / NCIMB 9086 / R18194 / 383).